Reading from the N-terminus, the 99-residue chain is Large ribosomal subunit protein bL21 (99 aa).

It belongs to the bacterial ribosomal protein bL21 family. In terms of assembly, part of the 50S ribosomal subunit. Contacts protein L20.

Its function is as follows. This protein binds to 23S rRNA in the presence of protein L20. In Mycoplasmopsis pulmonis (strain UAB CTIP) (Mycoplasma pulmonis), this protein is Large ribosomal subunit protein bL21.